Consider the following 162-residue polypeptide: Transcription elongation factor GreA (162 aa).

Residues 50–75 adopt a coiled-coil conformation; it reads YHAAREEQGHLESRIRQLQELLRTAK.

Belongs to the GreA/GreB family.

Necessary for efficient RNA polymerase transcription elongation past template-encoded arresting sites. The arresting sites in DNA have the property of trapping a certain fraction of elongating RNA polymerases that pass through, resulting in locked ternary complexes. Cleavage of the nascent transcript by cleavage factors such as GreA or GreB allows the resumption of elongation from the new 3'terminus. GreA releases sequences of 2 to 3 nucleotides. This Saccharopolyspora erythraea (strain ATCC 11635 / DSM 40517 / JCM 4748 / NBRC 13426 / NCIMB 8594 / NRRL 2338) protein is Transcription elongation factor GreA.